The chain runs to 322 residues: Eukaryotic translation initiation factor 3 subunit I (322 aa).

5 WD repeats span residues 4–43, 46–85, 141–180, 184–223, and 281–322; these read GHER…RLGT, GHQG…VIAS, MVES…KVVD, DHTA…CLKT, and GHFG…NIFE.

The protein belongs to the eIF-3 subunit I family. Component of the eukaryotic translation initiation factor 3 (eIF-3) complex. The eIF-3 complex interacts with pix.

Its subcellular location is the cytoplasm. Its function is as follows. Component of the eukaryotic translation initiation factor 3 (eIF-3) complex, which is involved in protein synthesis of a specialized repertoire of mRNAs and, together with other initiation factors, stimulates binding of mRNA and methionyl-tRNAi to the 40S ribosome. The eIF-3 complex specifically targets and initiates translation of a subset of mRNAs involved in cell proliferation. In Drosophila virilis (Fruit fly), this protein is Eukaryotic translation initiation factor 3 subunit I.